Consider the following 939-residue polypeptide: Aconitate hydratase A (939 aa).

The tract at residues 433–453 is disordered; that stretch reads GSGESLATGAEGRPSKPVTVA. Residues Cys475, Cys541, and Cys544 each coordinate [4Fe-4S] cluster.

The protein belongs to the aconitase/IPM isomerase family. As to quaternary structure, monomer. It depends on [4Fe-4S] cluster as a cofactor.

The catalysed reaction is citrate = D-threo-isocitrate. The enzyme catalyses (2S,3R)-3-hydroxybutane-1,2,3-tricarboxylate = 2-methyl-cis-aconitate + H2O. Its pathway is carbohydrate metabolism; tricarboxylic acid cycle; isocitrate from oxaloacetate: step 2/2. The protein operates within organic acid metabolism; propanoate degradation. In terms of biological role, involved in the catabolism of short chain fatty acids (SCFA) via the tricarboxylic acid (TCA)(acetyl degradation route) and probably via the 2-methylcitrate cycle I (propionate degradation route). Catalyzes the reversible isomerization of citrate to isocitrate via cis-aconitate. Could catalyze the hydration of 2-methyl-cis-aconitate to yield (2R,3S)-2-methylisocitrate. The apo form of AcnA functions as a RNA-binding regulatory protein. The polypeptide is Aconitate hydratase A (acn) (Corynebacterium glutamicum (strain ATCC 13032 / DSM 20300 / JCM 1318 / BCRC 11384 / CCUG 27702 / LMG 3730 / NBRC 12168 / NCIMB 10025 / NRRL B-2784 / 534)).